The primary structure comprises 427 residues: Serine hydroxymethyltransferase (427 aa).

(6S)-5,6,7,8-tetrahydrofolate-binding positions include Leu-117 and 121 to 123; that span reads GHL. N6-(pyridoxal phosphate)lysine is present on Lys-226.

It belongs to the SHMT family. In terms of assembly, homodimer. Pyridoxal 5'-phosphate is required as a cofactor.

The protein resides in the cytoplasm. The catalysed reaction is (6R)-5,10-methylene-5,6,7,8-tetrahydrofolate + glycine + H2O = (6S)-5,6,7,8-tetrahydrofolate + L-serine. It carries out the reaction L-threonine = acetaldehyde + glycine. It catalyses the reaction L-allo-threonine = acetaldehyde + glycine. It functions in the pathway one-carbon metabolism; tetrahydrofolate interconversion. Its pathway is amino-acid biosynthesis; glycine biosynthesis; glycine from L-serine: step 1/1. Functionally, its primary function is to catalyze the reversible interconversion of serine and glycine with tetrahydrofolate (THF) serving as the one-carbon carrier. This reaction serves as the major source of one-carbon groups required for the biosynthesis of purines, thymidylate, methionine, and other important biomolecules. Also exhibits THF-independent aldolase activity toward beta-hydroxyamino acids, producing glycine and aldehydes, via a retro-aldol mechanism. Thus, is able to catalyze the cleavage of L-threonine, L-allo-threonine, L-threo-beta-phenylserine and L-erythro-beta-phenylserine. This second activity is likely to be physiological in H.thermophilus, which is an organism that lacks the ortholog gene for the 'real' threonine aldolase characterized in mesophilic bacteria (LtaE), yeast and plants. This Hydrogenobacter thermophilus (strain DSM 6534 / IAM 12695 / TK-6) protein is Serine hydroxymethyltransferase.